The following is a 576-amino-acid chain: (E,E)-alpha-farnesene synthase (576 aa).

Arg289, Asp326, Asp330, Arg468, and Asn471 together coordinate (2E,6E)-farnesyl diphosphate. Asp326 and Asp330 together coordinate Mg(2+). The short motif at 326 to 330 is the DDXXD motif element; the sequence is DDVYD. Residues Asn471, Thr475, and Glu479 each coordinate Mg(2+). K(+) contacts are provided by Asp484 and Ser487.

Belongs to the terpene synthase family. Tpsb subfamily. As to quaternary structure, monomer. Mg(2+) is required as a cofactor. It depends on Mn(2+) as a cofactor. Requires K(+) as cofactor.

The protein resides in the cytoplasm. It catalyses the reaction (2E,6E)-farnesyl diphosphate = (3E,6E)-alpha-farnesene + diphosphate. Sesquiterpene synthase catalyzing the production of (E,E)-alpha-farnesene, the predominant terpene produced during storage of fruits. Produces all six isomers (E,E)-alpha-farnesene, (Z,E)-alpha-farnesene, (E,Z)-alpha-farnesene, (Z,Z)-alpha-farnesene, (E)-beta-farnesene and (Z)-beta-farnesene from a mix of isomeric forms of the farnesyl diphosphate precursor. Able to convert geranyl diphosphate to the monoterpenes (E)-beta-ocimene, linalool and beta-myrcene. Also has a prenyltransferase activity producing alpha-farnesene directly from geranyl diphosphate and isoprenyl diphosphate. The protein is (E,E)-alpha-farnesene synthase (AFS1) of Malus domestica (Apple).